The primary structure comprises 306 residues: Glutaminase (306 aa).

Substrate-binding residues include Ser-64, Asn-115, Glu-159, Asn-166, Tyr-190, Tyr-242, and Val-260.

The protein belongs to the glutaminase family. Homotetramer.

The catalysed reaction is L-glutamine + H2O = L-glutamate + NH4(+). The chain is Glutaminase from Aeromonas hydrophila subsp. hydrophila (strain ATCC 7966 / DSM 30187 / BCRC 13018 / CCUG 14551 / JCM 1027 / KCTC 2358 / NCIMB 9240 / NCTC 8049).